We begin with the raw amino-acid sequence, 394 residues long: Tyrosine--tRNA ligase, cytoplasmic (394 aa).

Serine 2 carries the post-translational modification N-acetylserine. Tyrosine 43 provides a ligand contact to L-tyrosine. The short motif at 48-56 is the 'HIGH' region element; that stretch reads PTGRPHCGY. 4 residues coordinate L-tyrosine: tyrosine 170, glutamine 174, aspartate 177, and glutamine 192. Residues 227 to 231 carry the 'KMSKS' region motif; that stretch reads KMSAS. Serine 235 carries the post-translational modification Phosphoserine. A disordered region spans residues 348–394; sequence QEASEKGYPVATPQKSKKAKKPKNKGTKYPGATKTNEIATKLEETKL. At threonine 359 the chain carries Phosphothreonine. The Nuclear localization signal signature appears at 360–378; that stretch reads PQKSKKAKKPKNKGTKYPG. Over residues 362 to 373 the composition is skewed to basic residues; sequence KSKKAKKPKNKG.

This sequence belongs to the class-I aminoacyl-tRNA synthetase family. As to quaternary structure, homodimer. Interacts with KNR4/SMI1.

It localises to the cytoplasm. The protein resides in the nucleus. The catalysed reaction is tRNA(Tyr) + L-tyrosine + ATP = L-tyrosyl-tRNA(Tyr) + AMP + diphosphate + H(+). Inhibited by N-ethylmaleimide and p-chloromercuribenzoate. In terms of biological role, catalyzes the attachment of L-tyrosine to tRNA(Tyr) in a two-step reaction: L-tyrosine is first activated by ATP to form Tyr-AMP and then transferred to the acceptor end of tRNA(Tyr). The specificity determinants on tRNA(Tyr) are the base pair C1-G72, the discriminator residue A73, and the three anticodon bases G34, U35 and A36. Also involved in nuclear tRNA export. Also attaches D-Tyr to tRNA(Tyr), this reaction is about 150-fold less efficient than attachment of L-Tyr. This Saccharomyces cerevisiae (strain ATCC 204508 / S288c) (Baker's yeast) protein is Tyrosine--tRNA ligase, cytoplasmic.